The chain runs to 302 residues: 4-hydroxy-tetrahydrodipicolinate synthase (302 aa).

Thr55 lines the pyruvate pocket. Tyr144 functions as the Proton donor/acceptor in the catalytic mechanism. Lys172 (schiff-base intermediate with substrate) is an active-site residue. Pyruvate is bound at residue Val214.

The protein belongs to the DapA family. In terms of assembly, homotetramer; dimer of dimers.

Its subcellular location is the cytoplasm. It carries out the reaction L-aspartate 4-semialdehyde + pyruvate = (2S,4S)-4-hydroxy-2,3,4,5-tetrahydrodipicolinate + H2O + H(+). It functions in the pathway amino-acid biosynthesis; L-lysine biosynthesis via DAP pathway; (S)-tetrahydrodipicolinate from L-aspartate: step 3/4. In terms of biological role, catalyzes the condensation of (S)-aspartate-beta-semialdehyde [(S)-ASA] and pyruvate to 4-hydroxy-tetrahydrodipicolinate (HTPA). In Synechococcus sp. (strain WH7803), this protein is 4-hydroxy-tetrahydrodipicolinate synthase.